Reading from the N-terminus, the 172-residue chain is Adenine phosphoribosyltransferase (172 aa).

It belongs to the purine/pyrimidine phosphoribosyltransferase family. As to quaternary structure, homodimer.

It localises to the cytoplasm. The enzyme catalyses AMP + diphosphate = 5-phospho-alpha-D-ribose 1-diphosphate + adenine. Its pathway is purine metabolism; AMP biosynthesis via salvage pathway; AMP from adenine: step 1/1. Functionally, catalyzes a salvage reaction resulting in the formation of AMP, that is energically less costly than de novo synthesis. The protein is Adenine phosphoribosyltransferase of Roseiflexus sp. (strain RS-1).